We begin with the raw amino-acid sequence, 164 residues long: ATP synthase subunit b (164 aa).

The helical transmembrane segment at 6-26 (GELVGNFILVTGSVIVLLLLI) threads the bilayer.

This sequence belongs to the ATPase B chain family. As to quaternary structure, F-type ATPases have 2 components, F(1) - the catalytic core - and F(0) - the membrane proton channel. F(1) has five subunits: alpha(3), beta(3), gamma(1), delta(1), epsilon(1). F(0) has three main subunits: a(1), b(2) and c(10-14). The alpha and beta chains form an alternating ring which encloses part of the gamma chain. F(1) is attached to F(0) by a central stalk formed by the gamma and epsilon chains, while a peripheral stalk is formed by the delta and b chains.

It is found in the cell membrane. Functionally, f(1)F(0) ATP synthase produces ATP from ADP in the presence of a proton or sodium gradient. F-type ATPases consist of two structural domains, F(1) containing the extramembraneous catalytic core and F(0) containing the membrane proton channel, linked together by a central stalk and a peripheral stalk. During catalysis, ATP synthesis in the catalytic domain of F(1) is coupled via a rotary mechanism of the central stalk subunits to proton translocation. Its function is as follows. Component of the F(0) channel, it forms part of the peripheral stalk, linking F(1) to F(0). The polypeptide is ATP synthase subunit b (Streptococcus pyogenes serotype M1).